Reading from the N-terminus, the 89-residue chain is Small ribosomal subunit protein bS20 (89 aa).

Belongs to the bacterial ribosomal protein bS20 family.

Binds directly to 16S ribosomal RNA. The chain is Small ribosomal subunit protein bS20 from Wolbachia sp. subsp. Drosophila simulans (strain wRi).